The sequence spans 238 residues: Ribonuclease PH (238 aa).

Phosphate-binding positions include arginine 87 and 125–127 (GTR).

It belongs to the RNase PH family. As to quaternary structure, homohexameric ring arranged as a trimer of dimers.

It catalyses the reaction tRNA(n+1) + phosphate = tRNA(n) + a ribonucleoside 5'-diphosphate. Functionally, phosphorolytic 3'-5' exoribonuclease that plays an important role in tRNA 3'-end maturation. Removes nucleotide residues following the 3'-CCA terminus of tRNAs; can also add nucleotides to the ends of RNA molecules by using nucleoside diphosphates as substrates, but this may not be physiologically important. Probably plays a role in initiation of 16S rRNA degradation (leading to ribosome degradation) during starvation. The polypeptide is Ribonuclease PH (Synechococcus elongatus (strain ATCC 33912 / PCC 7942 / FACHB-805) (Anacystis nidulans R2)).